Consider the following 3095-residue polypeptide: Centrosome-associated protein 350 (3095 aa).

Disordered stretches follow at residues 1-24 and 63-105; these read MRSSKSKEVPLPNPRNSQSKETIQ and TKKS…RSPL. A compositionally biased stretch (polar residues) spans 14–24; that stretch reads PRNSQSKETIQ. Ser84 and Ser140 each carry phosphoserine. 3 disordered regions span residues 219 to 239, 251 to 272, and 430 to 493; these read DEMPNRTKGSENNSKPSLNNM, SDSSPSSSACNSQRSDISKRQQ, and KILG…RAWS. Residues 228–238 are compositionally biased toward polar residues; it reads SENNSKPSLNN. Residues 251–265 show a composition bias toward low complexity; that stretch reads SDSSPSSSACNSQRS. Basic and acidic residues-rich tracts occupy residues 438-457 and 464-476; these read MEQKERRPTSNDRSGRERVA and GRAESDPKLDVSH. A Phosphoserine modification is found at Ser468. Low complexity predominate over residues 481 to 491; sequence RSSARSRSSRA. Position 503 is a phosphoserine (Ser503). 2 disordered regions span residues 538-623 and 671-718; these read QAVR…QKNK and ARQH…PPQP. Composition is skewed to basic and acidic residues over residues 587 to 623 and 690 to 699; these read YDTDEVRQYIVRQQEERRRRQHEEKKAQKEATEQKNK and ESDKENKIQE. A coiled-coil region spans residues 596-641; sequence IVRQQEERRRRQHEEKKAQKEATEQKNKRLQELYRRQREAFSKAKT. Ser691 bears the Phosphoserine mark. Residues 701–714 show a composition bias toward low complexity; that stretch reads PPSASSSSDLSLSE. A phosphoserine mark is found at Ser874 and Ser935. The segment at 977 to 996 is disordered; the sequence is SVSEGPLLSEGSLSEEEERR. Positions 979 to 988 are enriched in low complexity; that stretch reads SEGPLLSEGS. Ser1057 carries the post-translational modification Phosphoserine. 2 disordered regions span residues 1099–1128 and 1151–1265; these read YEDDFVSSPGSGTLTERKSTLESQVDGSSL and QHSS…SQKL. Residues 1119–1128 are compositionally biased toward polar residues; sequence LESQVDGSSL. The segment covering 1153-1168 has biased composition (low complexity); it reads SSGARSAGSTRSSSAS. The span at 1194-1206 shows a compositional bias: basic and acidic residues; that stretch reads DEEKVQSDSERGS. Position 1200 is a phosphoserine (Ser1200). Residues 1251–1265 show a composition bias toward low complexity; it reads QKTPTSPLSPSSQKL. Thr1253 is subject to Phosphothreonine. A phosphoserine mark is found at Ser1256 and Ser1259. Residues 1363 to 1402 are a coiled coil; that stretch reads IKAQQQRHERDLALLKLKAEQEALECQRQLEETRNKTAQV. Disordered stretches follow at residues 1490 to 1668, 1720 to 1739, 1787 to 1864, and 1893 to 2017; these read AETD…GQDS, LRDKGEDDKMPPLRKKQRGL, KLKS…QRRQ, and AWDK…PVKS. Positions 1503 to 1513 are enriched in basic and acidic residues; it reads QSKEGAVDSKR. Low complexity-rich tracts occupy residues 1517 to 1526 and 1536 to 1545; these read SPSRDSYSES and SSGSSRQDSP. A compositionally biased stretch (basic and acidic residues) spans 1551-1564; the sequence is KENEKPFHGEKMES. A Phosphoserine modification is found at Ser1606. The span at 1624 to 1640 shows a compositional bias: basic and acidic residues; that stretch reads ESHRRFNMEKKRGHHDD. A phosphoserine mark is found at Ser1641 and Ser1646. Residues 1700 to 1793 are a coiled coil; it reads KALKEKTKAE…LQEKLKSAGE (94 aa). Residues 1787–1796 show a composition bias toward basic and acidic residues; sequence KLKSAGEKKL. The residue at position 1812 (Ser1812) is a Phosphoserine. Positions 1819 to 1835 are enriched in low complexity; sequence ETRSPSPISISSSETSS. 2 stretches are compositionally biased toward basic and acidic residues: residues 1845–1864 and 1894–1915; these read SRMDEKFLTKREQKLMQRRQ and WDKELVKPRTPKKEQESQRTEQ. Residues 1850–1893 are a coiled coil; it reads KFLTKREQKLMQRRQHAEELLEWKRRLDAEEAEIQQMEKQALAA. Ser1930 is modified (phosphoserine). Residues 1980–1994 are compositionally biased toward low complexity; the sequence is STSPSKHSPPKSCLS. Residues 1999 to 2011 show a composition bias toward basic and acidic residues; it reads ESSKASHRTEGHC. Residues 2043–2092 are a coiled coil; sequence IEGRIRALKDELRKRKSVVEQLKREQRKRQKERLKAQEASLLRQLETYDE. The residue at position 2108 (Ser2108) is a Phosphoserine. 4 disordered regions span residues 2116–2155, 2191–2265, 2286–2427, and 2440–2471; these read KTLSSVSEKPKIKPHPLHRSETAKTWKSVTESERSRGSLA, IEHL…VEDA, LSSK…EISE, and VHSERLLELRSPTELMKSKERSDVGHEQGGTE. Over residues 2133–2151 the composition is skewed to basic and acidic residues; sequence HRSETAKTWKSVTESERSR. Ser2198 is modified (phosphoserine). 2 stretches are compositionally biased toward basic and acidic residues: residues 2202-2214 and 2227-2259; these read SSRKAQTESRDSL and NAPDRIYDVSEAKAEDTSQKSEIQEIESMKLES. Positions 2286–2300 are enriched in polar residues; that stretch reads LSSKELPSDSANVQQ. The span at 2301-2331 shows a compositional bias: basic and acidic residues; sequence DLDKPATETSHEKEEALKEDQSNHSTDDRSP. Over residues 2349–2362 the composition is skewed to polar residues; that stretch reads DSTCSGQLSVPKES. 2 stretches are compositionally biased toward basic and acidic residues: residues 2377-2387 and 2395-2407; these read ISADEISKDDS and LRKDSQSHRDRSQ. Residues 2409 to 2420 show a composition bias toward low complexity; it reads TRSSRSRATGSG. Ser2421 and Ser2450 each carry phosphoserine. Residues 2455 to 2465 show a composition bias toward basic and acidic residues; the sequence is MKSKERSDVGH. A CAP-Gly domain is found at 2504 to 2546; it reads GETDFAKGFWAGVELDKPEGNNNGTYDGIVYFVCKDKHGIFAP. The residue at position 2671 (Thr2671) is a Phosphothreonine. The stretch at 2700–2731 forms a coiled coil; sequence LLDLLTREKNQLEAQLKSSISEEKKSKQQLET. The tract at residues 2767 to 2793 is disordered; it reads QEFLDQKKVPPQDLPQNTEEQSPSVPS. Residues 2780–2791 are compositionally biased toward polar residues; it reads LPQNTEEQSPSV. A phosphoserine mark is found at Ser2809 and Ser2818.

As to quaternary structure, part of a ternary complex that contains CEP350, CEP43 and MAPRE1. Interacts (via C-terminus) directly with CEP43 (via N-terminus). Interacts with NR1H3, PPARA, PPARD and PPARG. Interacts directly with microtubules. Interacts with the fusion protein CEP43-FGFR1, and by doing so recruits and activates PI3K and PLC-gamma. Interacts with CYLD. Interacts with CFAP157. Interacts with CEP19 (via C-terminus). Interacts with CEP78; promoting CEP78 localization to centrosome and centriole. Post-translationally, phosphorylated during mitosis.

Its subcellular location is the cytoplasm. It is found in the cytoskeleton. It localises to the microtubule organizing center. The protein resides in the centrosome. The protein localises to the spindle. Its subcellular location is the nucleus. It is found in the centriole. It localises to the cilium basal body. Functionally, plays an essential role in centriole growth by stabilizing a procentriolar seed composed of at least, SASS6 and CPAP. Required for anchoring microtubules to the centrosomes and for the integrity of the microtubule network. Recruits PPARA to discrete subcellular compartments and thereby modulates PPARA activity. Required for ciliation. The chain is Centrosome-associated protein 350 from Mus musculus (Mouse).